The sequence spans 775 residues: Subtilisin-like protease SBT1.2 (775 aa).

The N-terminal stretch at 1–20 (MEPKPFFLCIIFLLFCSSSS) is a signal peptide. One can recognise an Inhibitor I9 domain in the interval 27 to 111 (TYIVQLHPNS…AVRPDHVLQV (85 aa)). The Peptidase S8 domain occupies 116 to 618 (SYKFLGLDGF…AGHVNPQKAI (503 aa)). Active-site charge relay system residues include D146 and H222. Positions 388 to 470 (GGDKGSEFCL…YTESVLLKAY (83 aa)) constitute a PA domain. N-linked (GlcNAc...) asparagine glycans are attached at residues N472 and N544. The Charge relay system role is filled by S552. The N-linked (GlcNAc...) asparagine glycan is linked to N652.

The protein belongs to the peptidase S8 family. As to expression, mostly expressed in leaves and cotyledons (especially in epidermal cells), and, to a lower extent, in floral buds, stems, and siliques. Strongly expressed in stomatal precursor cells (meristemoids and guard mother cells).

It localises to the secreted. The protein resides in the extracellular space. The protein localises to the apoplast. Its subcellular location is the cell membrane. Serine protease involved in the negative regulation of stomatal density and distribution. Not active on EPFL6 (AC Q1PEY6). Positive regulator of water use efficiency (WUE). The polypeptide is Subtilisin-like protease SBT1.2 (Arabidopsis thaliana (Mouse-ear cress)).